The following is a 93-amino-acid chain: uncharacterized protein (93 aa).

This sequence to M.tuberculosis Rv1738.

This is an uncharacterized protein from Mycobacterium tuberculosis (strain CDC 1551 / Oshkosh).